The primary structure comprises 553 residues: Probable malate:quinone oxidoreductase (553 aa).

Positions 524–553 (PPPKIDLGAPSQATGNAPARPAKASADMAL) are disordered.

Belongs to the MQO family. FAD is required as a cofactor.

It carries out the reaction (S)-malate + a quinone = a quinol + oxaloacetate. Its pathway is carbohydrate metabolism; tricarboxylic acid cycle; oxaloacetate from (S)-malate (quinone route): step 1/1. The chain is Probable malate:quinone oxidoreductase from Burkholderia cenocepacia (strain HI2424).